The chain runs to 180 residues: ATP synthase subunit delta (180 aa).

Belongs to the ATPase delta chain family. In terms of assembly, F-type ATPases have 2 components, F(1) - the catalytic core - and F(0) - the membrane proton channel. F(1) has five subunits: alpha(3), beta(3), gamma(1), delta(1), epsilon(1). F(0) has three main subunits: a(1), b(2) and c(10-14). The alpha and beta chains form an alternating ring which encloses part of the gamma chain. F(1) is attached to F(0) by a central stalk formed by the gamma and epsilon chains, while a peripheral stalk is formed by the delta and b chains.

The protein localises to the cell membrane. Its function is as follows. F(1)F(0) ATP synthase produces ATP from ADP in the presence of a proton or sodium gradient. F-type ATPases consist of two structural domains, F(1) containing the extramembraneous catalytic core and F(0) containing the membrane proton channel, linked together by a central stalk and a peripheral stalk. During catalysis, ATP synthesis in the catalytic domain of F(1) is coupled via a rotary mechanism of the central stalk subunits to proton translocation. In terms of biological role, this protein is part of the stalk that links CF(0) to CF(1). It either transmits conformational changes from CF(0) to CF(1) or is implicated in proton conduction. This chain is ATP synthase subunit delta, found in Limosilactobacillus reuteri (strain DSM 20016) (Lactobacillus reuteri).